Here is a 567-residue protein sequence, read N- to C-terminus: Urease subunit alpha (567 aa).

In terms of domain architecture, Urease spans 129 to 567; it reads GGIDSHIHFI…LPLAQRYFLF (439 aa). Ni(2+) is bound by residues histidine 134, histidine 136, and lysine 217. Lysine 217 bears the N6-carboxylysine mark. Histidine 219 lines the substrate pocket. Ni(2+) contacts are provided by histidine 246 and histidine 272. Residue histidine 320 is the Proton donor of the active site. Ni(2+) is bound at residue aspartate 360.

Belongs to the metallo-dependent hydrolases superfamily. Urease alpha subunit family. Heterotrimer of UreA (gamma), UreB (beta) and UreC (alpha) subunits. Three heterotrimers associate to form the active enzyme. Requires Ni cation as cofactor. Post-translationally, carboxylation allows a single lysine to coordinate two nickel ions.

The protein resides in the cytoplasm. The catalysed reaction is urea + 2 H2O + H(+) = hydrogencarbonate + 2 NH4(+). It functions in the pathway nitrogen metabolism; urea degradation; CO(2) and NH(3) from urea (urease route): step 1/1. This Pseudomonas putida (strain W619) protein is Urease subunit alpha.